Reading from the N-terminus, the 1000-residue chain is Kinesin-like protein CIN8 (1000 aa).

The segment covering 1-26 has biased composition (polar residues); it reads MPAENQNTGQDRSSNSISKNGNSQVG. Residues 1–28 are disordered; that stretch reads MPAENQNTGQDRSSNSISKNGNSQVGCH. The region spanning 36–477 is the Kinesin motor domain; the sequence is NITVAVRCRG…LEYASKAKNI (442 aa). 128–135 serves as a coordination point for ATP; the sequence is GMTSTGKT. Positions 220 to 242 are enriched in low complexity; the sequence is ANNTTSNSASSSRSNSRNSSPRS. Disordered regions lie at residues 220 to 248 and 260 to 312; these read ANNT…DLTP and KSLP…PNDQ. Over residues 261 to 276 the composition is skewed to polar residues; sequence SLPNTIKQQYQQQQAV. Residues 277–301 show a composition bias toward low complexity; that stretch reads NSRNNSSSNSGSTTNNASSNTNTNN. Residues 302 to 312 are compositionally biased toward polar residues; that stretch reads GQRSSMAPNDQ. Coiled coils occupy residues 518-615 and 860-904; these read MSQD…MALH and ISVM…IKNS. Residues 970–1000 are disordered; the sequence is VISPKKHAIEDENKSSENVDNEGSRKMLKIE. S972 is subject to Phosphoserine. Over residues 976-1000 the composition is skewed to basic and acidic residues; the sequence is HAIEDENKSSENVDNEGSRKMLKIE.

The protein belongs to the TRAFAC class myosin-kinesin ATPase superfamily. Kinesin family. BimC subfamily.

It is found in the cytoplasm. It localises to the cytoskeleton. The protein resides in the spindle. The protein localises to the mitochondrion. Elongates the mitotic spindle by interacting with spindle microtubules to generate an outward force pushing spindle poles apart. Following spindle assembly, CIN8 and KIP1 apparently act to oppose a force, possibly generated by KAR3, that draws separated poles back together. The chain is Kinesin-like protein CIN8 (CIN8) from Saccharomyces cerevisiae (strain ATCC 204508 / S288c) (Baker's yeast).